A 398-amino-acid chain; its full sequence is Acetate kinase (398 aa).

Asn8 is a Mg(2+) binding site. Residue Lys15 participates in ATP binding. Position 89 (Arg89) interacts with substrate. Asp146 serves as the catalytic Proton donor/acceptor. Residues His206–Gly210, Asp283–Arg285, and Gly331–Asn335 each bind ATP. Glu383 provides a ligand contact to Mg(2+).

This sequence belongs to the acetokinase family. As to quaternary structure, homodimer. Requires Mg(2+) as cofactor. Mn(2+) serves as cofactor.

The protein localises to the cytoplasm. It carries out the reaction acetate + ATP = acetyl phosphate + ADP. The protein operates within metabolic intermediate biosynthesis; acetyl-CoA biosynthesis; acetyl-CoA from acetate: step 1/2. Its function is as follows. Catalyzes the formation of acetyl phosphate from acetate and ATP. Can also catalyze the reverse reaction. The polypeptide is Acetate kinase (Streptococcus pyogenes serotype M49 (strain NZ131)).